A 279-amino-acid polypeptide reads, in one-letter code: Very long chain fatty acid elongase 1 (279 aa).

M1 bears the N-acetylmethionine mark. The next 7 membrane-spanning stretches (helical) occupy residues 23-43, 61-81, 110-130, 137-154, 176-196, 203-223, and 231-251; these read PLMG…YFIL, FMIV…YEFL, VAWL…IFIL, VTFL…SWWW, VVMY…PYLW, AIQL…YFMP, and IIIH…SNFW. Residues 275–279 carry the Di-lysine motif motif; it reads KVKAN.

This sequence belongs to the ELO family. ELOVL1 subfamily. In terms of assembly, interacts with LASS2, TECR and HSD17B12. Interacts with TECR. Expressed in a broad variety of tissues. Highly expressed in stomach, lung, kidney, skin and intestine. Moderately expressed in white adipose tissue, liver, spleen, brain, brown adipose tissue, heart and muscle. Weakly expressed in testis.

It localises to the endoplasmic reticulum membrane. It carries out the reaction a very-long-chain acyl-CoA + malonyl-CoA + H(+) = a very-long-chain 3-oxoacyl-CoA + CO2 + CoA. It catalyses the reaction eicosanoyl-CoA + malonyl-CoA + H(+) = 3-oxodocosanoyl-CoA + CO2 + CoA. The enzyme catalyses docosanoyl-CoA + malonyl-CoA + H(+) = 3-oxotetracosanoyl-CoA + CO2 + CoA. The catalysed reaction is tetracosanoyl-CoA + malonyl-CoA + H(+) = 3-oxohexacosanoyl-CoA + CO2 + CoA. It carries out the reaction (11Z)-eicosenoyl-CoA + malonyl-CoA + H(+) = 3-oxo-(13Z)-docosenoyl-CoA + CO2 + CoA. It catalyses the reaction (13Z)-docosenoyl-CoA + malonyl-CoA + H(+) = 3-oxo-(15Z)-tetracosenoyl-CoA + CO2 + CoA. It participates in lipid metabolism; fatty acid biosynthesis. Catalyzes the first and rate-limiting reaction of the four reactions that constitute the long-chain fatty acids elongation cycle. This endoplasmic reticulum-bound enzymatic process allows the addition of 2 carbons to the chain of long- and very long-chain fatty acids (VLCFAs) per cycle. Condensing enzyme that exhibits activity toward saturated and monounsaturated acyl-CoA substrates, with the highest activity towards C22:0 acyl-CoA. May participate in the production of both saturated and monounsaturated VLCFAs of different chain lengths that are involved in multiple biological processes as precursors of membrane lipids and lipid mediators. Important for saturated C24:0 and monounsaturated C24:1 sphingolipid synthesis. Indirectly inhibits RPE65 via production of VLCFAs. This chain is Very long chain fatty acid elongase 1, found in Mus musculus (Mouse).